Reading from the N-terminus, the 448-residue chain is tRNA modification GTPase MnmE (448 aa).

Positions 25, 83, and 122 each coordinate (6S)-5-formyl-5,6,7,8-tetrahydrofolate. In terms of domain architecture, TrmE-type G spans 218 to 372 (GFKVAIIGKP…LTQKLQKLLD (155 aa)). Asn228 serves as a coordination point for K(+). GTP-binding positions include 228 to 233 (NTGKSS), 247 to 253 (SDIAGTT), and 272 to 275 (DTAG). Ser232 is a Mg(2+) binding site. The K(+) site is built by Ser247, Ile249, and Thr252. Position 253 (Thr253) interacts with Mg(2+). Lys448 is a (6S)-5-formyl-5,6,7,8-tetrahydrofolate binding site.

This sequence belongs to the TRAFAC class TrmE-Era-EngA-EngB-Septin-like GTPase superfamily. TrmE GTPase family. Homodimer. Heterotetramer of two MnmE and two MnmG subunits. K(+) is required as a cofactor.

It localises to the cytoplasm. Its function is as follows. Exhibits a very high intrinsic GTPase hydrolysis rate. Involved in the addition of a carboxymethylaminomethyl (cmnm) group at the wobble position (U34) of certain tRNAs, forming tRNA-cmnm(5)s(2)U34. This chain is tRNA modification GTPase MnmE, found in Nitratiruptor sp. (strain SB155-2).